Reading from the N-terminus, the 358-residue chain is Transcriptional repressor protein KorB (358 aa).

Positions 1–42 are enriched in low complexity; that stretch reads MTAAQAKTTKKNTAAAAQEAAGAAQPSGLGLDSIGDLSSLLD. 2 disordered regions span residues 1-79 and 256-305; these read MTAA…FSPE and DPNT…DKLK. Over residues 275–285 the composition is skewed to acidic residues; the sequence is AGDGQDGEDGD. Positions 286 to 305 are enriched in basic and acidic residues; it reads QDGKDAKEKGAKEPDPDKLK.

Belongs to the ParB family.

In terms of biological role, in conjunction with KorA, inhibits the transcription of the kilA, trfA and korAB operons. Is also involved in the negative control of the kilB operon. The protein is Transcriptional repressor protein KorB (korB) of Escherichia coli.